The sequence spans 77 residues: DNA-directed RNA polymerase subunit epsilon (77 aa).

It belongs to the RNA polymerase subunit epsilon family. RNAP is composed of a core of 2 alpha, a beta and a beta' subunit. The core is associated with a delta subunit, and at least one of epsilon or omega. When a sigma factor is associated with the core the holoenzyme is formed, which can initiate transcription.

It catalyses the reaction RNA(n) + a ribonucleoside 5'-triphosphate = RNA(n+1) + diphosphate. Functionally, a non-essential component of RNA polymerase (RNAP). In Streptococcus pneumoniae serotype 19F (strain G54), this protein is DNA-directed RNA polymerase subunit epsilon.